We begin with the raw amino-acid sequence, 77 residues long: Translation initiation factor IF-1, chloroplastic (77 aa).

In terms of domain architecture, S1-like spans 1 to 71 (MKEQKWIHEG…SRGRIIYRLR (71 aa)).

This sequence belongs to the IF-1 family. As to quaternary structure, component of the 30S ribosomal translation pre-initiation complex which assembles on the 30S ribosome in the order IF-2 and IF-3, IF-1 and N-formylmethionyl-tRNA(fMet); mRNA recruitment can occur at any time during PIC assembly.

The protein resides in the plastid. Its subcellular location is the chloroplast. Functionally, one of the essential components for the initiation of protein synthesis. Stabilizes the binding of IF-2 and IF-3 on the 30S subunit to which N-formylmethionyl-tRNA(fMet) subsequently binds. Helps modulate mRNA selection, yielding the 30S pre-initiation complex (PIC). Upon addition of the 50S ribosomal subunit IF-1, IF-2 and IF-3 are released leaving the mature 70S translation initiation complex. The sequence is that of Translation initiation factor IF-1, chloroplastic from Buxus microphylla (Littleleaf boxwood).